The following is a 495-amino-acid chain: Glycerol kinase (495 aa).

Residue T11 coordinates ADP. ATP-binding residues include T11, T12, and S13. T11 contributes to the sn-glycerol 3-phosphate binding site. Position 15 (R15) interacts with ADP. Residues R81, E82, Y133, and D242 each coordinate sn-glycerol 3-phosphate. R81, E82, Y133, D242, and Q243 together coordinate glycerol. T264 and G307 together coordinate ADP. ATP-binding residues include T264, G307, Q311, and G408. The ADP site is built by G408 and N412.

Belongs to the FGGY kinase family.

It carries out the reaction glycerol + ATP = sn-glycerol 3-phosphate + ADP + H(+). It functions in the pathway polyol metabolism; glycerol degradation via glycerol kinase pathway; sn-glycerol 3-phosphate from glycerol: step 1/1. Its activity is regulated as follows. Inhibited by fructose 1,6-bisphosphate (FBP). Functionally, key enzyme in the regulation of glycerol uptake and metabolism. Catalyzes the phosphorylation of glycerol to yield sn-glycerol 3-phosphate. This Rhodospirillum rubrum (strain ATCC 11170 / ATH 1.1.1 / DSM 467 / LMG 4362 / NCIMB 8255 / S1) protein is Glycerol kinase.